The sequence spans 149 residues: UPF0260 protein Psyr_1567 (149 aa).

This sequence belongs to the UPF0260 family.

The sequence is that of UPF0260 protein Psyr_1567 from Pseudomonas syringae pv. syringae (strain B728a).